Reading from the N-terminus, the 461-residue chain is Argininosuccinate lyase (461 aa).

Belongs to the lyase 1 family. Argininosuccinate lyase subfamily.

It localises to the cytoplasm. The catalysed reaction is 2-(N(omega)-L-arginino)succinate = fumarate + L-arginine. Its pathway is amino-acid biosynthesis; L-arginine biosynthesis; L-arginine from L-ornithine and carbamoyl phosphate: step 3/3. Its activity is regulated as follows. Strongly inhibited by L-arginine. Inhibitory effects are lowered at pH 7.0 compared to those at pH 8.0. At 45 degrees Celsius and pH 8.0, activity decreases to 94%, 74% and 37% in the presence of 0.6 mM, 2.8 mM and 10 mM arginine, respectively. Activity also decreases to 86% in the presence of 10 mM sodium succinate or sodium citrate. Activity does not decrease in the presence of 1 mM or 10 mM L-lysine, which has a similar structure to arginine. Catalyzes the last step of arginine biosynthesis, the conversion of argininosuccinate into L-arginine and fumarate. This Synechocystis sp. (strain ATCC 27184 / PCC 6803 / Kazusa) protein is Argininosuccinate lyase.